The primary structure comprises 152 residues: 3-hydroxyacyl-[acyl-carrier-protein] dehydratase FabZ (152 aa).

His-54 is a catalytic residue.

This sequence belongs to the thioester dehydratase family. FabZ subfamily.

The protein localises to the cytoplasm. It catalyses the reaction a (3R)-hydroxyacyl-[ACP] = a (2E)-enoyl-[ACP] + H2O. Involved in unsaturated fatty acids biosynthesis. Catalyzes the dehydration of short chain beta-hydroxyacyl-ACPs and long chain saturated and unsaturated beta-hydroxyacyl-ACPs. This Buchnera aphidicola subsp. Schizaphis graminum (strain Sg) protein is 3-hydroxyacyl-[acyl-carrier-protein] dehydratase FabZ.